Here is an 86-residue protein sequence, read N- to C-terminus: Putative membrane protein insertion efficiency factor (86 aa).

This sequence belongs to the UPF0161 family.

The protein localises to the cell inner membrane. Its function is as follows. Could be involved in insertion of integral membrane proteins into the membrane. This Pseudomonas aeruginosa (strain UCBPP-PA14) protein is Putative membrane protein insertion efficiency factor.